A 350-amino-acid polypeptide reads, in one-letter code: Holliday junction branch migration complex subunit RuvB (350 aa).

Residues 1–186 (MAGHEEEDER…FGIPLRLDFY (186 aa)) form a large ATPase domain (RuvB-L) region. Residues Leu25, Arg26, Gly67, Lys70, Thr71, Thr72, 133 to 135 (EDF), Arg176, Tyr186, and Arg223 contribute to the ATP site. A Mg(2+)-binding site is contributed by Thr71. Residues 187 to 257 (ETDELVQIVT…IADAALNRLE (71 aa)) form a small ATPAse domain (RuvB-S) region. The interval 260–350 (GRGLDAMDRR…VQPDLWSDAP (91 aa)) is head domain (RuvB-H). Positions 296, 315, and 320 each coordinate DNA.

This sequence belongs to the RuvB family. Homohexamer. Forms an RuvA(8)-RuvB(12)-Holliday junction (HJ) complex. HJ DNA is sandwiched between 2 RuvA tetramers; dsDNA enters through RuvA and exits via RuvB. An RuvB hexamer assembles on each DNA strand where it exits the tetramer. Each RuvB hexamer is contacted by two RuvA subunits (via domain III) on 2 adjacent RuvB subunits; this complex drives branch migration. In the full resolvosome a probable DNA-RuvA(4)-RuvB(12)-RuvC(2) complex forms which resolves the HJ.

It is found in the cytoplasm. It carries out the reaction ATP + H2O = ADP + phosphate + H(+). Functionally, the RuvA-RuvB-RuvC complex processes Holliday junction (HJ) DNA during genetic recombination and DNA repair, while the RuvA-RuvB complex plays an important role in the rescue of blocked DNA replication forks via replication fork reversal (RFR). RuvA specifically binds to HJ cruciform DNA, conferring on it an open structure. The RuvB hexamer acts as an ATP-dependent pump, pulling dsDNA into and through the RuvAB complex. RuvB forms 2 homohexamers on either side of HJ DNA bound by 1 or 2 RuvA tetramers; 4 subunits per hexamer contact DNA at a time. Coordinated motions by a converter formed by DNA-disengaged RuvB subunits stimulates ATP hydrolysis and nucleotide exchange. Immobilization of the converter enables RuvB to convert the ATP-contained energy into a lever motion, pulling 2 nucleotides of DNA out of the RuvA tetramer per ATP hydrolyzed, thus driving DNA branch migration. The RuvB motors rotate together with the DNA substrate, which together with the progressing nucleotide cycle form the mechanistic basis for DNA recombination by continuous HJ branch migration. Branch migration allows RuvC to scan DNA until it finds its consensus sequence, where it cleaves and resolves cruciform DNA. In Rhodospirillum rubrum (strain ATCC 11170 / ATH 1.1.1 / DSM 467 / LMG 4362 / NCIMB 8255 / S1), this protein is Holliday junction branch migration complex subunit RuvB.